The sequence spans 366 residues: Chorismate synthase (366 aa).

Arg48 contributes to the NADP(+) binding site. FMN is bound by residues 131–133 (RAS), 243–244 (NA), Gly288, 303–307 (KPTSS), and Arg329.

Belongs to the chorismate synthase family. As to quaternary structure, homotetramer. The cofactor is FMNH2.

It catalyses the reaction 5-O-(1-carboxyvinyl)-3-phosphoshikimate = chorismate + phosphate. Its pathway is metabolic intermediate biosynthesis; chorismate biosynthesis; chorismate from D-erythrose 4-phosphate and phosphoenolpyruvate: step 7/7. Catalyzes the anti-1,4-elimination of the C-3 phosphate and the C-6 proR hydrogen from 5-enolpyruvylshikimate-3-phosphate (EPSP) to yield chorismate, which is the branch point compound that serves as the starting substrate for the three terminal pathways of aromatic amino acid biosynthesis. This reaction introduces a second double bond into the aromatic ring system. The chain is Chorismate synthase from Bartonella henselae (strain ATCC 49882 / DSM 28221 / CCUG 30454 / Houston 1) (Rochalimaea henselae).